Reading from the N-terminus, the 306-residue chain is D-alanine--D-alanine ligase (306 aa).

Active-site residues include glutamate 18 and serine 150. Residues 104–303 (KMLWKAFGLP…FEQLVVKILE (200 aa)) enclose the ATP-grasp domain. 134–189 (VAKLGLPLMVKPSLEGSSVGLTKVKAVEELKSAVEYALKFDNTILIEEWLAGDELT) contributes to the ATP binding site. Residues aspartate 257, glutamate 270, and asparagine 272 each coordinate Mg(2+). The active site involves serine 281.

It belongs to the D-alanine--D-alanine ligase family. Requires Mg(2+) as cofactor. It depends on Mn(2+) as a cofactor.

It localises to the cytoplasm. The enzyme catalyses 2 D-alanine + ATP = D-alanyl-D-alanine + ADP + phosphate + H(+). Its pathway is cell wall biogenesis; peptidoglycan biosynthesis. Cell wall formation. The chain is D-alanine--D-alanine ligase from Haemophilus influenzae (strain ATCC 51907 / DSM 11121 / KW20 / Rd).